A 369-amino-acid chain; its full sequence is UDP-N-acetylglucosamine--N-acetylmuramyl-(pentapeptide) pyrophosphoryl-undecaprenol N-acetylglucosamine transferase (369 aa).

Residues T15 to G17, N126, R169, S197, and Q299 each bind UDP-N-acetyl-alpha-D-glucosamine.

It belongs to the glycosyltransferase 28 family. MurG subfamily.

It is found in the cell inner membrane. The catalysed reaction is di-trans,octa-cis-undecaprenyl diphospho-N-acetyl-alpha-D-muramoyl-L-alanyl-D-glutamyl-meso-2,6-diaminopimeloyl-D-alanyl-D-alanine + UDP-N-acetyl-alpha-D-glucosamine = di-trans,octa-cis-undecaprenyl diphospho-[N-acetyl-alpha-D-glucosaminyl-(1-&gt;4)]-N-acetyl-alpha-D-muramoyl-L-alanyl-D-glutamyl-meso-2,6-diaminopimeloyl-D-alanyl-D-alanine + UDP + H(+). It participates in cell wall biogenesis; peptidoglycan biosynthesis. Cell wall formation. Catalyzes the transfer of a GlcNAc subunit on undecaprenyl-pyrophosphoryl-MurNAc-pentapeptide (lipid intermediate I) to form undecaprenyl-pyrophosphoryl-MurNAc-(pentapeptide)GlcNAc (lipid intermediate II). The sequence is that of UDP-N-acetylglucosamine--N-acetylmuramyl-(pentapeptide) pyrophosphoryl-undecaprenol N-acetylglucosamine transferase from Methylorubrum extorquens (strain CM4 / NCIMB 13688) (Methylobacterium extorquens).